A 113-amino-acid chain; its full sequence is Large ribosomal subunit protein bL19 (113 aa).

This sequence belongs to the bacterial ribosomal protein bL19 family.

Its function is as follows. This protein is located at the 30S-50S ribosomal subunit interface and may play a role in the structure and function of the aminoacyl-tRNA binding site. The chain is Large ribosomal subunit protein bL19 (rplS) from Mycobacterium bovis (strain ATCC BAA-935 / AF2122/97).